Reading from the N-terminus, the 1330-residue chain is Paired amphipathic helix protein Sin3-like 3 (1330 aa).

PAH domains are found at residues Gln-8–Gly-78 and Lys-94–Thr-164. Over residues Ile-191 to Leu-246 the composition is skewed to basic and acidic residues. The segment at Ile-191–Lys-281 is disordered. Residues Ile-262 to Thr-277 show a composition bias toward polar residues. The PAH 3 domain maps to Ala-283–Cys-351. Disordered regions lie at residues Gly-373 to His-401, Asn-718 to Ser-775, Lys-789 to Arg-808, Gln-882 to Asp-906, and Ser-920 to Cys-1002. Over residues Asp-383–His-401 the composition is skewed to basic and acidic residues. Low complexity predominate over residues Ser-723–Ser-734. The span at Lys-789 to Ser-800 shows a compositional bias: basic and acidic residues. Residues Ser-920–Gly-932 show a composition bias toward polar residues. 2 stretches are compositionally biased toward basic and acidic residues: residues Asp-933–Asn-949 and Asn-956–Tyr-968. The span at Gly-980–Asp-989 shows a compositional bias: acidic residues. Ser-996 bears the Phosphoserine mark.

In terms of assembly, interacts with ERF7 and the histone deacetylase HDA19.

It is found in the nucleus. Functionally, acts as a transcriptional repressor. Interacts with ERF7 to repress genes in abscisic acid and drought stress responses. The heterodimer represses transcription by tethering SNL3 to DNA. The polypeptide is Paired amphipathic helix protein Sin3-like 3 (SNL3) (Arabidopsis thaliana (Mouse-ear cress)).